Consider the following 64-residue polypeptide: p7b (64 aa).

Topologically, residues 1-12 (MECVCVDSSWPQ) are cytoplasmic. Residues 13–30 (WLRNLILGILISSILFIL) traverse the membrane as a helical; Signal-anchor for type II membrane protein segment. Over 31–64 (TKTQDTVAVYHEPSVYSIDQTQKFQKIDIHNGGK) the chain is Lumenal.

Belongs to the gammacarmovirus double gene block protein 2 family.

It localises to the host endoplasmic reticulum membrane. Its function is as follows. Required for cell-to-cell movement of virions in the host plant together with p7a. This chain is p7b, found in Maize chlorotic mottle virus (isolate United States/Kansas/1987) (MCMV).